Here is a 438-residue protein sequence, read N- to C-terminus: Probable 26S proteasome regulatory subunit rpn-6.1 (438 aa).

Positions 1 to 10 (MRETSSREDT) are enriched in basic and acidic residues. The segment at 1–30 (MRETSSREDTNNIGKAPEMSGGTIMDTMTS) is disordered. Positions 239–408 (DFKTAFSYFY…GMLIVFEIAV (170 aa)) constitute a PCI domain.

The protein belongs to the proteasome subunit S9 family. In terms of assembly, component of the lid subcomplex of the 19S proteasome regulatory particle complex (also named PA700 complex). The 26S proteasome consists of a 20S proteasome core and two 19S regulatory subunits.

Functionally, component of the lid subcomplex of the 26S proteasome, a multiprotein complex involved in the ATP-dependent degradation of ubiquitinated proteins. In the complex, rpn-6.1 is required for proteasome assembly. Plays a key role in increased proteasome activity in response to proteotoxic stress: induced by daf-16, promoting enhanced assembly of the 26S proteasome and higher proteasome activity, leading to extended lifespan. The protein is Probable 26S proteasome regulatory subunit rpn-6.1 of Caenorhabditis elegans.